The primary structure comprises 1218 residues: NACHT, LRR and PYD domains-containing protein 1a allele 4 (1218 aa).

A compositionally biased stretch (polar residues) spans 1 to 29 (MGESQSKQESNTRVAQHGSQQDVDPTFQT). 2 disordered regions span residues 1–44 (MGES…QVEQ) and 71–91 (EMDHESRRHSHQSKKKLDRSE). Over residues 77-87 (RRHSHQSKKKL) the composition is skewed to basic residues. The NACHT domain maps to 175–484 (QLVIIEGAAG…EFFAAMSYIL (310 aa)). ATP is bound at residue 181 to 188 (GAAGIGKS). LRR repeat units follow at residues 343–364 (KERNTIIDFNLIGSIPVLLTLC), 673–693 (NLEELDLSGNPLSYSAVRSLC), and 730–750 (RLAELDLRLNDLGDNGVRQLC). Positions 799–815 (TMPTENTDGEESLTSSK) are enriched in polar residues. A disordered region spans residues 799 to 842 (TMPTENTDGEESLTSSKQQQQQSGDKHMEPLGTDDDFWGPSGPV). Residues 835–968 (FWGPSGPVST…HFAVLENPSF (134 aa)) form a ZU5 region. The FIIND domain occupies 835–1118 (FWGPSGPVST…LRPALPRMAS (284 aa)). Residues 969 to 1118 (SPMGVLLRMI…LRPALPRMAS (150 aa)) are UPA. The region spanning 1122 to 1211 (DAPALLHFVD…HLIMDLLEKS (90 aa)) is the CARD domain.

It belongs to the NLRP family. Interacts (via LRR repeats) with BCL2 and BCL2L1 (via the loop between motifs BH4 and BH3). Interacts with NOD2; this interaction is enhanced in the presence of muramyl dipeptide (MDP) and increases IL1B release. Interacts with EIF2AK2/PKR; this interaction requires EIF2AK2 activity, is accompanied by EIF2AK2 autophosphorylation and promotes inflammasome assembly in response to danger-associated signals. Interacts with MEFV; this interaction targets Nlrp1a to degradation by autophagy, hence preventing excessive IL1B- and IL18-mediated inflammation. Interacts with DPP9; leading to inhibit activation of the inflammasome. DPP9 acts via formation of a ternary complex, composed of a DPP9 homodimer, one full-length NLRP1 protein, and one cleaved C-terminus of Nlrp1a (NACHT, LRR and PYD domains-containing protein 1a, C-terminus). Interacts with DPP8; leading to inhibit activation of the inflammasome, probably via formation of a ternary complex with DPP8. In terms of assembly, interacts with the C-terminal part of Nlrp1a (NACHT, LRR and PYD domains-containing protein 1a, C-terminus) in absence of pathogens and other damage-associated signals. As to quaternary structure, interacts with the N-terminal part of Nlrp1a (NACHT, LRR and PYD domains-containing protein 1a, N-terminus) in absence of pathogens and other damage-associated signals. Homomultimer; forms the Nlrp1a inflammasome polymeric complex, a filament composed of homopolymers of this form in response to pathogens and other damage-associated signals. The Nlrp1a inflammasome polymeric complex directly recruits pro-caspase-1 (proCASP1) independently of PYCARD/ASC. Interacts (via CARD domain) with CASP1 (via CARD domain); leading to CASP1 activation. Post-translationally, autocatalytically cleaved. Autocatalytic cleavage in FIIND region occurs constitutively, prior to activation signals, and is required for inflammasome activity (IL1B release), possibly by facilitating CASP1 binding. Both N- and C-terminal parts remain associated non-covalently. In terms of processing, ubiquitinated in response to pathogen-associated signals, leading to its degradation by the proteasome and subsequent release of the cleaved C-terminal part of the protein (NACHT, LRR and PYD domains-containing protein 1a, C-terminus), which polymerizes and forms the Nlrp1a inflammasome.

The protein resides in the cytoplasm. It localises to the cytosol. The protein localises to the nucleus. Its subcellular location is the inflammasome. With respect to regulation, activated by pathogens and other damage-associated signals: activation promotes ubiquitination and degradation of the N-terminal part, releasing the cleaved C-terminal part of the protein (NACHT, LRR and PYD domains-containing protein 1a, C-terminus), which polymerizes and forms the Nlrp1a inflammasome. Nlrp1a inflammasome is inhibited by DPP8 and DPP9, which sequester the C-terminal fragment of Nlrp1a (NACHT, LRR and PYD domains-containing protein 1a, C-terminus) in a ternary complex, thereby preventing Nlrp1a oligomerization and activation. Nlrp1a inflammasome is strongly activated by Val-boroPro (Talabostat, PT-100), an inhibitor of dipeptidyl peptidases DPP8 and DPP9. Val-boroPro relieves inhibition of DPP8 and/or DPP9 by promoting disruption of the ternary complex, releasing its C-terminal part from autoinhibition. Not activated by cleavage by B.anthracis lethal toxin (LT) endopeptidase. Functionally, acts as the sensor component of the Nlrp1a inflammasome, which mediates inflammasome activation in response to various pathogen-associated signals, leading to subsequent pyroptosis. Inflammasomes are supramolecular complexes that assemble in the cytosol in response to pathogens and other damage-associated signals and play critical roles in innate immunity and inflammation. Acts as a recognition receptor (PRR): recognizes specific pathogens and other damage-associated signals, such as Val-boroPro inhibitor, and mediates the formation of the inflammasome polymeric complex. In response to pathogen-associated signals, the N-terminal part of Nlrp1a is degraded by the proteasome, releasing the cleaved C-terminal part of the protein (NACHT, LRR and PYD domains-containing protein 1a, C-terminus), which polymerizes to initiate the formation of the inflammasome complex: the inflammasome directly recruits pro-caspase-1 (proCASP1) independently of PYCARD/ASC and promotes caspase-1 (CASP1) activation, which subsequently cleaves and activates inflammatory cytokines IL1B and IL18 and gasdermin-D (GSDMD), leading to pyroptosis. In the absence of GSDMD expression, the Nlrp1a inflammasome is able to recruit and activate CASP8, leading to activation of gasdermin-E (GSDME). In terms of biological role, constitutes the precursor of the Nlrp1a inflammasome, which mediates autoproteolytic processing within the FIIND domain to generate the N-terminal and C-terminal parts, which are associated non-covalently in absence of pathogens and other damage-associated signals. Its function is as follows. Regulatory part that prevents formation of the Nlrp1a inflammasome: in absence of pathogens and other damage-associated signals, interacts with the C-terminal part of Nlrp1a (NACHT, LRR and PYD domains-containing protein 1a, C-terminus), preventing activation of the Nlrp1a inflammasome. In response to pathogen-associated signals, this part is ubiquitinated by the N-end rule pathway and degraded by the proteasome, releasing the cleaved C-terminal part of the protein, which polymerizes and forms the Nlrp1a inflammasome. Constitutes the active part of the Nlrp1a inflammasome. In absence of pathogens and other damage-associated signals, interacts with the N-terminal part of Nlrp1a (NACHT, LRR and PYD domains-containing protein 1a, N-terminus), preventing activation of the Nlrp1a inflammasome. In response to pathogen-associated signals, the N-terminal part of Nlrp1a is degraded by the proteasome, releasing this form, which polymerizes to form the Nlrp1a inflammasome complex: the Nlrp1a inflammasome complex then directly recruits pro-caspase-1 (proCASP1) and promotes caspase-1 (CASP1) activation, leading to gasdermin-D (GSDMD) cleavage and subsequent pyroptosis. The chain is NACHT, LRR and PYD domains-containing protein 1a allele 4 from Rattus norvegicus (Rat).